The following is a 119-amino-acid chain: Large ribosomal subunit protein uL14 (119 aa).

It belongs to the universal ribosomal protein uL14 family. Part of the 50S ribosomal subunit. Forms a cluster with proteins L3 and L19. In the 70S ribosome, L14 and L19 interact and together make contacts with the 16S rRNA in bridges B5 and B8.

Its function is as follows. Binds to 23S rRNA. Forms part of two intersubunit bridges in the 70S ribosome. The polypeptide is Large ribosomal subunit protein uL14 (Anaplasma phagocytophilum (strain HZ)).